The primary structure comprises 248 residues: Large ribosomal subunit protein uL30B (248 aa).

The segment at 1–45 (MSQKKQKIQVEQKVPENVAKKTQRDSKLRDAVAKRRTERLAANKT) is disordered. The segment covering 8 to 41 (IQVEQKVPENVAKKTQRDSKLRDAVAKRRTERLA) has biased composition (basic and acidic residues).

It belongs to the universal ribosomal protein uL30 family.

In terms of biological role, binds to G-rich structures in 28S rRNA and in mRNAs. Plays a regulatory role in the translation apparatus; inhibits cell-free translation of mRNAs. The polypeptide is Large ribosomal subunit protein uL30B (Rpl7-2) (Paramecium tetraurelia).